The sequence spans 465 residues: MSLLNVREYSNISMIKGPLIAVQGVSDAAYNELVEIEMPDGSKRRGLVVDSQMGVTFVQVFEGTTGISPTGSKVRFLGRGLEVKISEEMLGRIFNPLGEPLDNGPPVIGGEKRNINGDPINPATREYPEEFIQTGISAIDGLNSLLRGQKLPIFSGSGLPANTLAAQIAKQATVRGEESNFAVVFAAIGVRYDEALFFRKFFEETGAINRVAMFVTLANDPPSLKILTPKTALTLAEYLAFEKDMHVLAILIDMTNYCEALRELSASREEVPGRGGYPGYMYTDLATIYERAGKVIGKKGSITQMPILTMPNDDMTHPIPDLTGYITEGQIVLDRSLFNKGIYPPINVLMSLSRLMKDGIGEGKTRDDHKDLSNQLFAAYARAQDIRGLAAIIGEDSLSEVDRKYLLFAEAFERRFVAQGVNENRSIETTLDIGWEVLSILPESELSLIRSEYIKKYHPNYRGKK.

Belongs to the ATPase alpha/beta chains family. In terms of assembly, has multiple subunits with at least A(3), B(3), C, D, E, F, H, I and proteolipid K(x).

It localises to the cell membrane. Functionally, component of the A-type ATP synthase that produces ATP from ADP in the presence of a proton gradient across the membrane. The B chain is a regulatory subunit. This Sulfurisphaera tokodaii (strain DSM 16993 / JCM 10545 / NBRC 100140 / 7) (Sulfolobus tokodaii) protein is A-type ATP synthase subunit B.